The following is a 229-amino-acid chain: Interleukin-27 subunit beta (229 aa).

The first 20 residues, 1-20 (MTPQLLLALVLWASCPPCSG), serve as a signal peptide directing secretion. 2 consecutive Fibronectin type-III domains span residues 24–130 (PPAA…IKPD) and 131–227 (PPEG…TMSL). N-linked (GlcNAc...) asparagine glycosylation is found at asparagine 55 and asparagine 105.

The protein belongs to the type I cytokine receptor family. Type 3 subfamily. As to quaternary structure, heterodimer with IL27/IL27A; not disulfide-linked. This heterodimer is known as interleukin IL-27. Heterodimer with IL12A; not disulfide-linked. This heterodimer is known as interleukin IL-35. Interacts with SQSTM1.

It localises to the secreted. Functionally, associates with IL27 to form the IL-27 interleukin, a heterodimeric cytokine which functions in innate immunity. IL-27 has pro- and anti-inflammatory properties, that can regulate T-helper cell development, suppress T-cell proliferation, stimulate cytotoxic T-cell activity, induce isotype switching in B-cells, and that has diverse effects on innate immune cells. Among its target cells are CD4 T-helper cells which can differentiate in type 1 effector cells (TH1), type 2 effector cells (TH2) and IL17 producing helper T-cells (TH17). It drives rapid clonal expansion of naive but not memory CD4 T-cells. It also strongly synergizes with IL-12 to trigger interferon-gamma/IFN-gamma production of naive CD4 T-cells, binds to the cytokine receptor WSX-1/TCCR. Another important role of IL-27 is its antitumor activity as well as its antiangiogenic activity with activation of production of antiangiogenic chemokines. The chain is Interleukin-27 subunit beta (EBI3) from Homo sapiens (Human).